The chain runs to 867 residues: Alanine--tRNA ligase (867 aa).

4 residues coordinate Zn(2+): His559, His563, Cys661, and His665.

This sequence belongs to the class-II aminoacyl-tRNA synthetase family. Zn(2+) serves as cofactor.

The protein resides in the cytoplasm. The enzyme catalyses tRNA(Ala) + L-alanine + ATP = L-alanyl-tRNA(Ala) + AMP + diphosphate. Functionally, catalyzes the attachment of alanine to tRNA(Ala) in a two-step reaction: alanine is first activated by ATP to form Ala-AMP and then transferred to the acceptor end of tRNA(Ala). Also edits incorrectly charged Ser-tRNA(Ala) and Gly-tRNA(Ala) via its editing domain. In Aquifex aeolicus (strain VF5), this protein is Alanine--tRNA ligase.